Reading from the N-terminus, the 80-residue chain is MEKIPIRPFSDPASIISLCRCTLENSNAPLSLLCSATNKFILSARDSADLNEKGDFMNIFKPISYIASLAPREVTLLALV.

This Escherichia coli (strain K12) protein is Protein YibX.